The primary structure comprises 585 residues: Butyrophilin subfamily 3 member A3 (585 aa).

The signal sequence occupies residues 1-29 (MKMASSLACLLLNFHVSVFLVQLLTPCSA). 2 Ig-like V-type domains span residues 30-139 (QFSV…KALV) and 145-236 (ALGS…ASIS). At 30–248 (QFSVLGPSGP…DPFFTSAQPW (219 aa)) the chain is on the extracellular side. 2 cysteine pairs are disulfide-bonded: cysteine 52-cysteine 126 and cysteine 166-cysteine 220. Asparagine 115 carries an N-linked (GlcNAc...) asparagine glycan. The chain crosses the membrane as a helical span at residues 249-269 (IAALAGTLPISLLLLAGASYF). Over 270-585 (LWRQQKEKIA…KPQACTEALY (316 aa)) the chain is Cytoplasmic. One can recognise a B30.2/SPRY domain in the interval 322–518 (RGEKSLAYHE…LTICPTPKEV (197 aa)). A disordered region spans residues 560–585 (AGAEGVSPSTTTSQNHKPQACTEALY). Over residues 566-576 (SPSTTTSQNHK) the composition is skewed to polar residues.

This sequence belongs to the immunoglobulin superfamily. BTN/MOG family.

It is found in the membrane. The protein is Butyrophilin subfamily 3 member A3 (BTN3A3) of Pongo abelii (Sumatran orangutan).